Here is a 414-residue protein sequence, read N- to C-terminus: CCA-adding enzyme (414 aa).

2 residues coordinate ATP: G8 and R11. CTP-binding residues include G8 and R11. Residues D21 and D23 each coordinate Mg(2+). 3 residues coordinate ATP: R91, R137, and R140. Residues R91, R137, and R140 each contribute to the CTP site.

This sequence belongs to the tRNA nucleotidyltransferase/poly(A) polymerase family. Bacterial CCA-adding enzyme type 2 subfamily. Requires Mg(2+) as cofactor.

It carries out the reaction a tRNA precursor + 2 CTP + ATP = a tRNA with a 3' CCA end + 3 diphosphate. The catalysed reaction is a tRNA with a 3' CCA end + 2 CTP + ATP = a tRNA with a 3' CCACCA end + 3 diphosphate. Functionally, catalyzes the addition and repair of the essential 3'-terminal CCA sequence in tRNAs without using a nucleic acid template. Adds these three nucleotides in the order of C, C, and A to the tRNA nucleotide-73, using CTP and ATP as substrates and producing inorganic pyrophosphate. tRNA 3'-terminal CCA addition is required both for tRNA processing and repair. Also involved in tRNA surveillance by mediating tandem CCA addition to generate a CCACCA at the 3' terminus of unstable tRNAs. While stable tRNAs receive only 3'-terminal CCA, unstable tRNAs are marked with CCACCA and rapidly degraded. This is CCA-adding enzyme from Buchnera aphidicola subsp. Acyrthosiphon pisum (strain Tuc7).